We begin with the raw amino-acid sequence, 156 residues long: Ribosome maturation factor RimP (156 aa).

The protein belongs to the RimP family.

It is found in the cytoplasm. In terms of biological role, required for maturation of 30S ribosomal subunits. This is Ribosome maturation factor RimP from Anoxybacillus flavithermus (strain DSM 21510 / WK1).